Reading from the N-terminus, the 376-residue chain is uncharacterized protein (376 aa).

Residues 24 to 44 form a helical membrane-spanning segment; that stretch reads YLSIISIISVFLLNSSIVYSC. H251 contributes to the Zn(2+) binding site.

Belongs to the peptidase M23B family. Zn(2+) is required as a cofactor.

It localises to the cell membrane. This is an uncharacterized protein from Buchnera aphidicola subsp. Baizongia pistaciae (strain Bp).